We begin with the raw amino-acid sequence, 230 residues long: MQKIGILGAMREEITPILELFGVDFEEIPLGGNVFHKGVYHNKEIIVAYSKIGKVHSTLTTTSMILAFGVQKVLFSGVAGSLVKDLKINDLLVATQLVQHDVDLSAFDHPLGFIPESAIFIETSGSLNALAKKIANEQHIALKEGVIASGDQFVHSKERKEFLVSEFKASAVEMEGASVAFVCQKFGVPCCVLRSISDNADEKAGMSFDEFLEKSAHTSAKFLKSMVDEL.

The active-site Proton acceptor is the Glu13. Residues Gly80, Val154, and 174-175 (ME) contribute to the substrate site. Asp198 functions as the Proton donor in the catalytic mechanism.

The protein belongs to the PNP/UDP phosphorylase family. MtnN subfamily. In terms of assembly, homodimer.

The catalysed reaction is 6-amino-6-deoxyfutalosine + H2O = dehypoxanthine futalosine + adenine. The enzyme catalyses S-adenosyl-L-homocysteine + H2O = S-(5-deoxy-D-ribos-5-yl)-L-homocysteine + adenine. It catalyses the reaction S-methyl-5'-thioadenosine + H2O = 5-(methylsulfanyl)-D-ribose + adenine. It carries out the reaction 5'-deoxyadenosine + H2O = 5-deoxy-D-ribose + adenine. It functions in the pathway quinol/quinone metabolism; menaquinone biosynthesis. The protein operates within amino-acid biosynthesis; L-methionine biosynthesis via salvage pathway; S-methyl-5-thio-alpha-D-ribose 1-phosphate from S-methyl-5'-thioadenosine (hydrolase route): step 1/2. Its activity is regulated as follows. Is inhibited by the transition state analog BuT-DADMe-ImmA. This compound is also able to inhibit H.pylori growth and is more efficient than antibiotics commonly used in ulcer therapy. Functionally, catalyzes the direct conversion of aminodeoxyfutalosine (AFL) into dehypoxanthine futalosine (DHFL) and adenine via the hydrolysis of the N-glycosidic bond; this reaction seems to represent an essential step in the menaquinone biosynthesis pathway in Helicobacter species. Also catalyzes the hydrolysis of 5'-methylthioadenosine (MTA) to adenine and 5'-methylthioribose. Can also probably use S-adenosylhomocysteine (SAH) as substrate, leading to adenine and S-ribosylhomocysteine. These other activities highlight the tremendous versatility of the enzyme, which also plays key roles in S-adenosylmethionine recycling and in the biosynthesis of the quorum-sensing molecule autoinducer-2. In Helicobacter pylori (strain J99 / ATCC 700824) (Campylobacter pylori J99), this protein is Aminodeoxyfutalosine nucleosidase (mtnN).